A 199-amino-acid chain; its full sequence is N-(5'-phosphoribosyl)anthranilate isomerase (199 aa).

Belongs to the TrpF family.

It catalyses the reaction N-(5-phospho-beta-D-ribosyl)anthranilate = 1-(2-carboxyphenylamino)-1-deoxy-D-ribulose 5-phosphate. Its pathway is amino-acid biosynthesis; L-tryptophan biosynthesis; L-tryptophan from chorismate: step 3/5. This is N-(5'-phosphoribosyl)anthranilate isomerase from Streptococcus pneumoniae (strain Hungary19A-6).